Reading from the N-terminus, the 455-residue chain is Pentatricopeptide repeat-containing protein At3g26630, chloroplastic (455 aa).

The N-terminal 19 residues, 1 to 19, are a transit peptide targeting the chloroplast; sequence MAAPSPSSPPNLLSPPPFR. PPR repeat units lie at residues 51 to 81, 82 to 117, 118 to 152, 153 to 187, 188 to 214, 215 to 249, 250 to 284, 285 to 315, 316 to 350, 352 to 387, and 388 to 418; these read DQLL…LQSP, STFT…QSQF, DKFT…GFFN, DVFF…SIVS, WTTM…MPMR, NVVS…DVKP, NEFT…GFVL, DCFL…MQGK, SLAT…ASVE, DAIT…GISP, and IREH…MDSD.

The protein belongs to the PPR family. PCMP-A subfamily.

Its subcellular location is the plastid. It is found in the chloroplast. This is Pentatricopeptide repeat-containing protein At3g26630, chloroplastic (PCMP-A6) from Arabidopsis thaliana (Mouse-ear cress).